Reading from the N-terminus, the 170-residue chain is Lipoprotein signal peptidase (170 aa).

Helical transmembrane passes span 9–29 (FNIF…KYLV), 72–92 (IFFL…SLKE), and 94–114 (NCIA…NVID). Active-site residues include Asp-124 and Asp-146. Residues 143 to 163 (NFADSYVVIGMILFLVYDFFI) form a helical membrane-spanning segment.

It belongs to the peptidase A8 family.

Its subcellular location is the cell inner membrane. The catalysed reaction is Release of signal peptides from bacterial membrane prolipoproteins. Hydrolyzes -Xaa-Yaa-Zaa-|-(S,diacylglyceryl)Cys-, in which Xaa is hydrophobic (preferably Leu), and Yaa (Ala or Ser) and Zaa (Gly or Ala) have small, neutral side chains.. Its pathway is protein modification; lipoprotein biosynthesis (signal peptide cleavage). Functionally, this protein specifically catalyzes the removal of signal peptides from prolipoproteins. The sequence is that of Lipoprotein signal peptidase from Borreliella burgdorferi (strain ATCC 35210 / DSM 4680 / CIP 102532 / B31) (Borrelia burgdorferi).